Consider the following 393-residue polypeptide: 8-amino-7-oxononanoate synthase (393 aa).

Arg-18 contributes to the substrate binding site. 105-106 serves as a coordination point for pyridoxal 5'-phosphate; it reads GY. Position 130 (His-130) interacts with substrate. Pyridoxal 5'-phosphate contacts are provided by Ser-178, His-206, and Thr-234. N6-(pyridoxal phosphate)lysine is present on Lys-237. Thr-353 is a binding site for substrate.

This sequence belongs to the class-II pyridoxal-phosphate-dependent aminotransferase family. BioF subfamily. As to quaternary structure, homodimer. The cofactor is pyridoxal 5'-phosphate.

It catalyses the reaction 6-carboxyhexanoyl-[ACP] + L-alanine + H(+) = (8S)-8-amino-7-oxononanoate + holo-[ACP] + CO2. It participates in cofactor biosynthesis; biotin biosynthesis. Catalyzes the decarboxylative condensation of pimeloyl-[acyl-carrier protein] and L-alanine to produce 8-amino-7-oxononanoate (AON), [acyl-carrier protein], and carbon dioxide. The sequence is that of 8-amino-7-oxononanoate synthase from Geotalea daltonii (strain DSM 22248 / JCM 15807 / FRC-32) (Geobacter daltonii).